Consider the following 447-residue polypeptide: UPF0210 protein Ldb1026 (447 aa).

Belongs to the UPF0210 family. As to quaternary structure, homodimer.

In Lactobacillus delbrueckii subsp. bulgaricus (strain ATCC 11842 / DSM 20081 / BCRC 10696 / JCM 1002 / NBRC 13953 / NCIMB 11778 / NCTC 12712 / WDCM 00102 / Lb 14), this protein is UPF0210 protein Ldb1026.